We begin with the raw amino-acid sequence, 876 residues long: Probable LRR receptor-like protein kinase At1g51890 (876 aa).

The signal sequence occupies residues Met1–Ala19. Residues Gln20–Ala500 lie on the Extracellular side of the membrane. Residues Asn45, Asn90, Asn138, Asn177, Asn251, Asn259, Asn284, Asn290, Asn327, Asn335, Asn397, Asn412, and Asn417 are each glycosylated (N-linked (GlcNAc...) asparagine). LRR repeat units lie at residues Gln407–Thr430, His431–Met453, and Asn455–Gln476. Residues Asn455, Asn460, Asn468, Asn481, and Asn494 are each glycosylated (N-linked (GlcNAc...) asparagine). The helical transmembrane segment at Ile501 to Val521 threads the bilayer. Residues Ile522–Ser872 are Cytoplasmic-facing. Phosphothreonine is present on Thr561. Positions Lys570–Leu842 constitute a Protein kinase domain. ATP is bound by residues Leu576–Val584 and Lys597. At Tyr642 the chain carries Phosphotyrosine. Asp694 acts as the Proton acceptor in catalysis. Phosphothreonine is present on residues Thr729 and Thr734. A Phosphotyrosine modification is found at Tyr742.

The protein belongs to the protein kinase superfamily. Ser/Thr protein kinase family.

The protein localises to the cell membrane. The enzyme catalyses L-seryl-[protein] + ATP = O-phospho-L-seryl-[protein] + ADP + H(+). It carries out the reaction L-threonyl-[protein] + ATP = O-phospho-L-threonyl-[protein] + ADP + H(+). This Arabidopsis thaliana (Mouse-ear cress) protein is Probable LRR receptor-like protein kinase At1g51890.